Consider the following 144-residue polypeptide: Flagellar assembly factor FliW (144 aa).

It belongs to the FliW family. In terms of assembly, interacts with translational regulator CsrA and flagellin(s).

The protein resides in the cytoplasm. In terms of biological role, acts as an anti-CsrA protein, binds CsrA and prevents it from repressing translation of its target genes, one of which is flagellin. Binds to flagellin and participates in the assembly of the flagellum. The sequence is that of Flagellar assembly factor FliW from Geobacillus sp. (strain WCH70).